The following is a 314-amino-acid chain: GTPase-interacting component 1 (314 aa).

Disordered regions lie at residues 112–156 (SRRH…KHDV), 199–221 (TMDS…QLDS), and 241–261 (LGDS…SFSG). The CRIB domain maps to 126-139 (ISTPFDFHHISHAN). Positions 140 to 156 (GKREDNPLESHEEKHDV) are enriched in basic and acidic residues. Residues 208–221 (ETNNTPNGNKQLDS) are compositionally biased toward polar residues. The segment covering 251-260 (PSSPSVSSFS) has biased composition (low complexity).

The protein belongs to the BORG/CEP family. As to quaternary structure, interacts with GTP-bound CDC42.

It is found in the bud neck. It localises to the bud tip. The protein localises to the cytoplasm. The protein resides in the cell cortex. Its subcellular location is the cytoskeleton. Required for cell size and shape control, bud site selection, bud emergence, actin cytoskeletal organization, mitotic spindle orientation/positioning, and mating projection formation in response to mating pheromone. This is GTPase-interacting component 1 (GIC1) from Saccharomyces cerevisiae (strain ATCC 204508 / S288c) (Baker's yeast).